Reading from the N-terminus, the 61-residue chain is Photosystem II reaction center protein K (61 aa).

A propeptide spanning residues 1–24 is cleaved from the precursor; that stretch reads MPNILSLTCICFNSVIYPTSFFFA. A helical transmembrane segment spans residues 32 to 52; the sequence is IFNPIVDFMPVIPVLFFLLAF.

This sequence belongs to the PsbK family. In terms of assembly, PSII is composed of 1 copy each of membrane proteins PsbA, PsbB, PsbC, PsbD, PsbE, PsbF, PsbH, PsbI, PsbJ, PsbK, PsbL, PsbM, PsbT, PsbX, PsbY, PsbZ, Psb30/Ycf12, at least 3 peripheral proteins of the oxygen-evolving complex and a large number of cofactors. It forms dimeric complexes.

The protein resides in the plastid. It is found in the chloroplast thylakoid membrane. In terms of biological role, one of the components of the core complex of photosystem II (PSII). PSII is a light-driven water:plastoquinone oxidoreductase that uses light energy to abstract electrons from H(2)O, generating O(2) and a proton gradient subsequently used for ATP formation. It consists of a core antenna complex that captures photons, and an electron transfer chain that converts photonic excitation into a charge separation. The chain is Photosystem II reaction center protein K from Oryza nivara (Indian wild rice).